We begin with the raw amino-acid sequence, 80 residues long: MSEINQKVVDIIVDKLAVAPAEVTLEANLANDLGADSLDIVELILEFERVFDINIPEDQAEHIKTVGQVVEYLEKRLAEK.

Positions 2 to 77 constitute a Carrier domain; that stretch reads SEINQKVVDI…QVVEYLEKRL (76 aa). O-(pantetheine 4'-phosphoryl)serine is present on Ser37.

The protein belongs to the acyl carrier protein (ACP) family. 4'-phosphopantetheine is transferred from CoA to a specific serine of apo-ACP by AcpS. This modification is essential for activity because fatty acids are bound in thioester linkage to the sulfhydryl of the prosthetic group.

The protein localises to the cytoplasm. The protein operates within lipid metabolism; fatty acid biosynthesis. Its function is as follows. Carrier of the growing fatty acid chain in fatty acid biosynthesis. In Amoebophilus asiaticus (strain 5a2), this protein is Acyl carrier protein.